The sequence spans 126 residues: MAVCSSSSLILLTVFLSVAVETRPSSDRDEEQVLKSLFGPHLTSLILAPPTSNDSTEGSSGSPEPPTPSEAPVLIHGDRGTASQILRSFLRQREKTRRWGRKPMVAGGGCFGMKMDRIGSISGLGC.

A signal peptide spans 1–22; the sequence is MAVCSSSSLILLTVFLSVAVET. A propeptide spanning residues 23–102 is cleaved from the precursor; it reads RPSSDRDEEQ…REKTRRWGRK (80 aa). Positions 44–80 are disordered; sequence SLILAPPTSNDSTEGSSGSPEPPTPSEAPVLIHGDRG. Cysteine 110 and cysteine 126 are oxidised to a cystine.

Belongs to the natriuretic peptide family. As to expression, brain and spinal cord.

It localises to the secreted. Functionally, exhibits natriuretic and vasodepressant activity. Has cGMP-stimulating activity. May help to regulate body fluid homeostasis in a variety of aquatic environments. The sequence is that of C-type natriuretic peptide 2 from Oryzias latipes (Japanese rice fish).